We begin with the raw amino-acid sequence, 115 residues long: NADH-ubiquinone oxidoreductase chain 3 (115 aa).

The next 3 helical transmembrane spans lie at 3-23, 55-75, and 86-106; these read LILT…IAFW, FFLV…LLPL, and TMLT…AYEW.

This sequence belongs to the complex I subunit 3 family. In terms of assembly, core subunit of respiratory chain NADH dehydrogenase (Complex I) which is composed of 45 different subunits. Interacts with TMEM186. Interacts with TMEM242.

It is found in the mitochondrion inner membrane. The enzyme catalyses a ubiquinone + NADH + 5 H(+)(in) = a ubiquinol + NAD(+) + 4 H(+)(out). Functionally, core subunit of the mitochondrial membrane respiratory chain NADH dehydrogenase (Complex I) which catalyzes electron transfer from NADH through the respiratory chain, using ubiquinone as an electron acceptor. Essential for the catalytic activity of complex I. The protein is NADH-ubiquinone oxidoreductase chain 3 of Rhinoceros unicornis (Greater Indian rhinoceros).